We begin with the raw amino-acid sequence, 211 residues long: ATP phosphoribosyltransferase (211 aa).

Belongs to the ATP phosphoribosyltransferase family. Short subfamily. In terms of assembly, heteromultimer composed of HisG and HisZ subunits.

The protein localises to the cytoplasm. It catalyses the reaction 1-(5-phospho-beta-D-ribosyl)-ATP + diphosphate = 5-phospho-alpha-D-ribose 1-diphosphate + ATP. It participates in amino-acid biosynthesis; L-histidine biosynthesis; L-histidine from 5-phospho-alpha-D-ribose 1-diphosphate: step 1/9. In terms of biological role, catalyzes the condensation of ATP and 5-phosphoribose 1-diphosphate to form N'-(5'-phosphoribosyl)-ATP (PR-ATP). Has a crucial role in the pathway because the rate of histidine biosynthesis seems to be controlled primarily by regulation of HisG enzymatic activity. In Pseudomonas aeruginosa (strain ATCC 15692 / DSM 22644 / CIP 104116 / JCM 14847 / LMG 12228 / 1C / PRS 101 / PAO1), this protein is ATP phosphoribosyltransferase (hisG).